Reading from the N-terminus, the 340-residue chain is 3-isopropylmalate dehydrogenase (340 aa).

Substrate contacts are provided by Arg88, Arg98, Arg122, and Asp212. 3 residues coordinate Mg(2+): Asp212, Asp236, and Asp240. Gly272–Asp284 serves as a coordination point for NAD(+).

It belongs to the isocitrate and isopropylmalate dehydrogenases family. LeuB type 2 subfamily. Homodimer. The cofactor is Mg(2+). Mn(2+) is required as a cofactor.

It is found in the cytoplasm. The enzyme catalyses (2R,3S)-3-isopropylmalate + NAD(+) = 4-methyl-2-oxopentanoate + CO2 + NADH. The protein operates within amino-acid biosynthesis; L-leucine biosynthesis; L-leucine from 3-methyl-2-oxobutanoate: step 3/4. Catalyzes the oxidation of 3-carboxy-2-hydroxy-4-methylpentanoate (3-isopropylmalate) to 3-carboxy-4-methyl-2-oxopentanoate. The product decarboxylates to 4-methyl-2 oxopentanoate. The polypeptide is 3-isopropylmalate dehydrogenase (leuB) (Corynebacterium glutamicum (strain ATCC 13032 / DSM 20300 / JCM 1318 / BCRC 11384 / CCUG 27702 / LMG 3730 / NBRC 12168 / NCIMB 10025 / NRRL B-2784 / 534)).